The sequence spans 229 residues: Germin-like protein subfamily 1 member 7 (229 aa).

The N-terminal stretch at 1 to 24 (MEGFLRFLVAKAILLALASSFVSC) is a signal peptide. A disulfide bond links C34 and C50. Positions 64–215 (SGLNIAGNTI…AFQLDVNVVK (152 aa)) constitute a Cupin type-1 domain. The N-linked (GlcNAc...) asparagine glycan is linked to N79. Residues H112, H114, E119, and H161 each contribute to the Mn(2+) site.

The protein belongs to the germin family. In terms of assembly, oligomer (believed to be a pentamer but probably hexamer).

Its subcellular location is the secreted. The protein resides in the extracellular space. The protein localises to the apoplast. Functionally, may play a role in plant defense. Probably has no oxalate oxidase activity even if the active site is conserved. This chain is Germin-like protein subfamily 1 member 7, found in Arabidopsis thaliana (Mouse-ear cress).